The following is a 436-amino-acid chain: Homeobox protein PKNOX1 (436 aa).

Residues 23–50 (ELKTEQDPNCSDPDAEGVSPPPIESQTP) form a disordered region. 2 positions are modified to phosphoserine: serine 33 and serine 41. Residues 80-163 (GSEGTTSASF…MNSETLLSGE (84 aa)) enclose the MEIS N-terminal domain. The segment at residues 259–321 (SKNKRGVLPK…NARRRILQPM (63 aa)) is a DNA-binding region (homeobox; TALE-type). Residues 401 to 436 (AGQSEDESVDSTEDEGGALAPTHISGLVLENSDSLQ) are disordered. Over residues 404 to 416 (SEDESVDSTEDEG) the composition is skewed to acidic residues.

The protein belongs to the TALE/MEIS homeobox family. Interacts with MN1.

It localises to the nucleus. In terms of biological role, activates transcription in the presence of PBX1A and HOXA1. Functionally, (Microbial infection) In complex with PBX1, binds to the 5'-TGATTGAC-3' consensus sequence in the U5 region of Moloney murine leukemia virus and promotes viral transcription. The sequence is that of Homeobox protein PKNOX1 from Mus musculus (Mouse).